The primary structure comprises 476 residues: Adenosylhomocysteinase (476 aa).

The substrate site is built by Thr-61, Asp-140, and Glu-200. 201–203 (TTT) lines the NAD(+) pocket. Substrate is bound by residues Lys-230 and Asp-234. Residues Asn-235, 264–269 (GYGDVG), Glu-287, Asn-322, 343–345 (IGH), and Asn-389 each bind NAD(+).

This sequence belongs to the adenosylhomocysteinase family. NAD(+) serves as cofactor.

The protein resides in the cytoplasm. The enzyme catalyses S-adenosyl-L-homocysteine + H2O = L-homocysteine + adenosine. The protein operates within amino-acid biosynthesis; L-homocysteine biosynthesis; L-homocysteine from S-adenosyl-L-homocysteine: step 1/1. May play a key role in the regulation of the intracellular concentration of adenosylhomocysteine. The protein is Adenosylhomocysteinase of Acidovorax ebreus (strain TPSY) (Diaphorobacter sp. (strain TPSY)).